The sequence spans 763 residues: Amine oxidase [copper-containing] 3 (763 aa).

Residues 1-5 lie on the Cytoplasmic side of the membrane; that stretch reads MNQKT. The helical; Signal-anchor for type II membrane protein transmembrane segment at 6–26 threads the bilayer; that stretch reads ILVLLILAVITIFALVCVLLV. The Extracellular segment spans residues 27–763; that stretch reads GRGGDGGEPS…AFSHGGFSHN (737 aa). A glycan (O-linked (GalNAc...) serine) is linked at Ser-43. An N-linked (GlcNAc...) asparagine glycan is attached at Asn-137. An intrachain disulfide couples Cys-198 to Cys-199. Thr-212 carries an O-linked (GalNAc...) threonine glycan. Residues Asn-232 and Asn-294 are each glycosylated (N-linked (GlcNAc...) asparagine). The active-site Proton acceptor is the Asp-386. Cysteines 404 and 430 form a disulfide. Tyr-471 serves as the catalytic Schiff-base intermediate with substrate; via topaquinone. Tyr-471 is modified (2',4',5'-topaquinone). Positions 520 and 522 each coordinate Cu(2+). Residues Asp-529, Leu-530, Asp-531, and Glu-572 each coordinate Ca(2+). Asn-592 carries an N-linked (GlcNAc...) (complex) asparagine glycan. Asn-618 carries N-linked (GlcNAc...) asparagine glycosylation. Residues Glu-641, Phe-663, and Asn-665 each contribute to the Ca(2+) site. N-linked (GlcNAc...) asparagine glycosylation occurs at Asn-666. Ca(2+) contacts are provided by Glu-667, Asp-673, and Leu-674. Thr-679 carries an O-linked (GlcNAc) threonine glycan. A Cu(2+)-binding site is contributed by His-684. A disulfide bond links Cys-734 and Cys-741.

It belongs to the copper/topaquinone oxidase family. As to quaternary structure, homodimer; disulfide-linked. Can heterodimerize with isoform 2 leading to reduced surface expression. Probably forms heterodimers with AOC2. Cu(2+) serves as cofactor. It depends on Ca(2+) as a cofactor. The cofactor is L-topaquinone. Topaquinone (TPQ) is generated by copper-dependent autoxidation of a specific tyrosyl residue. Post-translationally, N- and O-glycosylated. As to expression, strongly expressed on the high endothelial venules of peripheral lymph nodes and on hepatic endothelia. Also highly expressed in appendix, lung and small intestine. Expressed also in adipose tissue, in bone marrow, colon, heart, kidney, ovary, pancreas, placenta, prostate, skeletal muscle, spleen and testis. Isoform 2 seems to be the predominant transcript in fetal kidneys, fetal cartilage and fetal tonsils. The highest relative expression of isoform 2 occurs in skeletal muscle, heart, pancreas, kidney, and lung.

It localises to the cell membrane. The enzyme catalyses methylamine + O2 + H2O = formaldehyde + H2O2 + NH4(+). The catalysed reaction is benzylamine + O2 + H2O = benzaldehyde + H2O2 + NH4(+). It carries out the reaction 2-phenylethylamine + O2 + H2O = 2-phenylacetaldehyde + H2O2 + NH4(+). In terms of biological role, catalyzes the oxidative deamination of primary amines to the corresponding aldehydes with the concomitant production of hydrogen peroxide and ammonia. Has a preference for the primary monoamines methylamine and benzylamine. Could also act on 2-phenylethylamine but much less efficiently. At endothelial cells surface can also function as a cell adhesion protein that participates in lymphocyte extravasation and recirculation by mediating the binding of lymphocytes to peripheral lymph node vascular endothelial cells in an L-selectin-independent fashion. Has no semicarbazide-sensitive amine oxidase (SSAO) activity. This chain is Amine oxidase [copper-containing] 3, found in Homo sapiens (Human).